The sequence spans 331 residues: High-affinity nickel-transport protein NixA (331 aa).

7 consecutive transmembrane segments (helical) span residues 3-23, 77-97, 110-130, 184-204, 213-233, 259-279, and 302-322; these read LWFP…ALLF, MGHS…IAWA, VVGT…NAII, PVGF…LLAL, VVGM…FDTL, ITAL…FQVI, and DLGY…FFLW.

The protein belongs to the NiCoT transporter (TC 2.A.52) family.

It localises to the cell inner membrane. High-affinity nickel intake protein. Imports nickel ions in an energy-dependent fashion. Necessary for the expression of catalytically active urease. The chain is High-affinity nickel-transport protein NixA (nixA) from Helicobacter pylori (strain J99 / ATCC 700824) (Campylobacter pylori J99).